Reading from the N-terminus, the 600-residue chain is NADH-quinone oxidoreductase subunit C/D (600 aa).

Residues 1–190 (MVNNMTDLTA…DPFELTKAKQ (190 aa)) form an NADH dehydrogenase I subunit C region. The NADH dehydrogenase I subunit D stretch occupies residues 214 to 600 (DFMFLNLGPN…IDFVMSDVDR (387 aa)).

It in the N-terminal section; belongs to the complex I 30 kDa subunit family. This sequence in the C-terminal section; belongs to the complex I 49 kDa subunit family. In terms of assembly, NDH-1 is composed of 13 different subunits. Subunits NuoB, CD, E, F, and G constitute the peripheral sector of the complex.

Its subcellular location is the cell inner membrane. It carries out the reaction a quinone + NADH + 5 H(+)(in) = a quinol + NAD(+) + 4 H(+)(out). NDH-1 shuttles electrons from NADH, via FMN and iron-sulfur (Fe-S) centers, to quinones in the respiratory chain. The immediate electron acceptor for the enzyme in this species is believed to be ubiquinone. Couples the redox reaction to proton translocation (for every two electrons transferred, four hydrogen ions are translocated across the cytoplasmic membrane), and thus conserves the redox energy in a proton gradient. The protein is NADH-quinone oxidoreductase subunit C/D of Salmonella paratyphi A (strain ATCC 9150 / SARB42).